The sequence spans 341 residues: Ribosomal RNA small subunit methyltransferase C (341 aa).

This sequence belongs to the methyltransferase superfamily. RsmC family. In terms of assembly, monomer.

The protein resides in the cytoplasm. The catalysed reaction is guanosine(1207) in 16S rRNA + S-adenosyl-L-methionine = N(2)-methylguanosine(1207) in 16S rRNA + S-adenosyl-L-homocysteine + H(+). Functionally, specifically methylates the guanine in position 1207 of 16S rRNA in the 30S particle. The protein is Ribosomal RNA small subunit methyltransferase C of Pseudoalteromonas translucida (strain TAC 125).